Here is a 362-residue protein sequence, read N- to C-terminus: Peptide chain release factor 1 (362 aa).

An N5-methylglutamine modification is found at Gln237.

This sequence belongs to the prokaryotic/mitochondrial release factor family. Post-translationally, methylated by PrmC. Methylation increases the termination efficiency of RF1.

The protein resides in the cytoplasm. In terms of biological role, peptide chain release factor 1 directs the termination of translation in response to the peptide chain termination codons UAG and UAA. This chain is Peptide chain release factor 1, found in Aliivibrio salmonicida (strain LFI1238) (Vibrio salmonicida (strain LFI1238)).